A 365-amino-acid chain; its full sequence is Regulatory protein RapG (365 aa).

TPR repeat units lie at residues 135–168, 169–202, 209–242, 244–284, and 326–359; these read GKLY…KKKL, ASAL…TSEL, AQLL…DEYA, SAYY…EPNR, and RELS…EELI.

This sequence belongs to the Rap family.

Its subcellular location is the cytoplasm. Its activity is regulated as follows. Inhibited by PhrG. Functionally, involved in the regulation of expression of DegU-controlled genes. Inhibits the binding of DegU to the promoter regions of aprE, coding for an extracellular alkaline protease, and comK, a master regulator for development of genetic competence. RapG does not stimulate dephosphorylation of DegU-P. In Bacillus subtilis (strain 168), this protein is Regulatory protein RapG (rapG).